Reading from the N-terminus, the 912-residue chain is MVTCVPASEQIGCAERDSQIYSEDTGGTEAVRVTDCRSPEDSGPQNEPGYCNSEDSGQLMASYEGKARGYQVPPFGWRICLAHEFAEKRKPFQANNVSLSNLVKHFGMGLRYLKWWYRKTQVEKKTPFIDMFNSVPLRQIYGCPLGGIGGGTITRGWRGQFCRWQLNPGMYQHQTVIADQFIVCLRRDGRTVYQQVLSLELPSVLRSWNWGLCGYFAFYHALYPRAWTVYQLPGQNVTLTCRQITPILPHDYQDSSLPVGVFVWDVENEGDETLDVSIMFSMRNGLGGEDDAAGGLWNEPFRLEQDGTTVQGLLLHHPTPPNPYTMAVAARHTADTTVTYTTAFDPDSTGQQVWQDLLQDGQLDSPAGQSTPTQRGEGVAGAVCASSKLLPRGRCCLEFSLAWDMPRIMFGAKGQVHYRRYTRFFGSDGDVAPALSHYALCQYAGWENSISAWQNPVLDDRSLPAWYKSALFNELYFLADGGTVWLEVPEDSLPEELGGSMYQLRPILQDYGRFGYLEGQEYRMYNTYDVHFYASFALVMLWPKLELSLQYDMALATFKEDLTRRRYLMSGVVAPVKRRNVIPHDIGDPDDEPWLRVNAYLIHDTADWKDLNLKFVLQVYRDYYLTGDQGFLKDMWPVCLAVMESEMKFDKDQDGLIENGGYADQTYDGWVTTGPSAYCGGLWLAAVAVMVQMAVLCGAQDVQDKFSSILCRGREAYERLLWNGRYYNYDSSSQPQSRSVMSDQCAGQWFLRACGLGEGDTEVFPTLHVVRALKTIFELNVQAFAGGAMGAVNGMQPHGVPDRSSVQSDEVWVGVVYGLAATMIQEGLTWEGFRTAEGCYRTVWERLGLAFQTPEAYCQQRVFRSLAYMRPLSIWAMQLALQQQQHKKNSSRPAVTQGTAPSQPECGPKRSL.

Positions 886–912 are disordered; it reads HKKNSSRPAVTQGTAPSQPECGPKRSL. The segment covering 891-902 has biased composition (polar residues); that stretch reads SRPAVTQGTAPS.

Belongs to the non-lysosomal glucosylceramidase family.

It localises to the endoplasmic reticulum membrane. The protein localises to the golgi apparatus membrane. It carries out the reaction a beta-D-glucosyl-(1&lt;-&gt;1')-N-acylsphing-4-enine + H2O = an N-acylsphing-4-enine + D-glucose. It catalyses the reaction a beta-D-galactosyl-(1&lt;-&gt;1')-N-acylsphing-4-enine + H2O = an N-acylsphing-4-enine + D-galactose. The catalysed reaction is beta-D-glucosyl-(1-&gt;3)-O-lithocholate + H2O = lithocholate + D-glucose. The enzyme catalyses beta-D-glucosyl-(1-&gt;3)-O-chenodeoxycholate + H2O = chenodeoxycholate + D-glucose. It carries out the reaction a di-trans,poly-cis-dolichyl beta-D-glucosyl phosphate + chenodeoxycholate = beta-D-glucosyl-(1-&gt;3)-O-chenodeoxycholate + a di-trans,poly-cis-dolichyl phosphate + H(+). It catalyses the reaction octyl beta-D-glucose + chenodeoxycholate = beta-D-glucosyl-(1-&gt;3)-O-chenodeoxycholate + octan-1-ol. The catalysed reaction is cholesteryl 3-beta-D-glucoside + H2O = cholesterol + D-glucose. The enzyme catalyses a beta-D-glucosyl-(1&lt;-&gt;1')-N-acylsphing-4-enine + cholesterol = cholesteryl 3-beta-D-glucoside + an N-acylsphing-4-enine. It carries out the reaction beta-D-glucosyl-N-(9Z-octadecenoyl)-sphing-4E-enine + cholesterol = N-(9Z-octadecenoyl)-sphing-4-enine + cholesteryl 3-beta-D-glucoside. It catalyses the reaction a beta-D-galactosyl-(1&lt;-&gt;1')-N-acylsphing-4-enine + cholesterol = cholesteryl 3-beta-D-galactoside + an N-acylsphing-4-enine. The catalysed reaction is 1-(beta-D-galactosyl)-N-dodecanoylsphing-4-enine + cholesterol = cholesteryl 3-beta-D-galactoside + N-dodecanoylsphing-4-enine. It functions in the pathway lipid metabolism; sphingolipid metabolism. Its pathway is steroid metabolism; cholesterol metabolism. Enzymatic activity is dependent on membrane association and requires the presence of lipids. Non-lysosomal glucosylceramidase that catalyzes the hydrolysis of glucosylceramides/GlcCers (such as beta-D-glucosyl-(1&lt;-&gt;1')-N-acylsphing-4-enine) to free glucose and ceramides (such as N-acylsphing-4-enine). GlcCers are membrane glycosphingolipids that have a wide intracellular distribution. They are the main precursors of more complex glycosphingolipids that play a role in cellular growth, differentiation, adhesion, signaling, cytoskeletal dynamics and membrane properties. Involved in the transglucosylation of cholesterol, transfers glucose from GlcCer to cholesterol, thereby modifying its water solubility and biological properties. Under specific conditions, may catalyze the reverse reaction, transferring glucose from cholesteryl-3-beta-D-glucoside to ceramide (such as N-acylsphing-4-enine). May play a role in the metabolism of bile acids. Able to hydrolyze bile acid 3-O-glucosides as well as to produce bile acid-glucose conjugates thanks to a bile acid glucosyl transferase activity. Catalyzes the hydrolysis of galactosylceramides/GalCers (such as beta-D-galactosyl-(1&lt;-&gt;1')-N-acylsphing-4-enine), as well as the galactosyl transfer between GalCers and cholesterol in vitro with lower activity compared with their activity against GlcCers. This is Non-lysosomal glucosylceramidase from Rattus norvegicus (Rat).